Reading from the N-terminus, the 180-residue chain is Crossover junction endodeoxyribonuclease RuvC (180 aa).

Active-site residues include Asp-7, Glu-66, and Asp-138. 3 residues coordinate Mg(2+): Asp-7, Glu-66, and Asp-138.

The protein belongs to the RuvC family. Homodimer which binds Holliday junction (HJ) DNA. The HJ becomes 2-fold symmetrical on binding to RuvC with unstacked arms; it has a different conformation from HJ DNA in complex with RuvA. In the full resolvosome a probable DNA-RuvA(4)-RuvB(12)-RuvC(2) complex forms which resolves the HJ. Mg(2+) serves as cofactor.

It localises to the cytoplasm. It carries out the reaction Endonucleolytic cleavage at a junction such as a reciprocal single-stranded crossover between two homologous DNA duplexes (Holliday junction).. Its function is as follows. The RuvA-RuvB-RuvC complex processes Holliday junction (HJ) DNA during genetic recombination and DNA repair. Endonuclease that resolves HJ intermediates. Cleaves cruciform DNA by making single-stranded nicks across the HJ at symmetrical positions within the homologous arms, yielding a 5'-phosphate and a 3'-hydroxyl group; requires a central core of homology in the junction. The consensus cleavage sequence is 5'-(A/T)TT(C/G)-3'. Cleavage occurs on the 3'-side of the TT dinucleotide at the point of strand exchange. HJ branch migration catalyzed by RuvA-RuvB allows RuvC to scan DNA until it finds its consensus sequence, where it cleaves and resolves the cruciform DNA. The polypeptide is Crossover junction endodeoxyribonuclease RuvC (Paraburkholderia phytofirmans (strain DSM 17436 / LMG 22146 / PsJN) (Burkholderia phytofirmans)).